A 396-amino-acid chain; its full sequence is Elongation factor Tu (396 aa).

In terms of domain architecture, tr-type G spans 10–206 (KPHVNVGTIG…ALDTYIPEPE (197 aa)). The segment at 19–26 (GHVDHGKT) is G1. GTP is bound at residue 19–26 (GHVDHGKT). Thr-26 serves as a coordination point for Mg(2+). The G2 stretch occupies residues 60 to 64 (GITIN). Residues 81-84 (DCPG) are G3. GTP contacts are provided by residues 81–85 (DCPGH) and 136–139 (NKCD). Residues 136 to 139 (NKCD) form a G4 region. Positions 174–176 (SAL) are G5.

The protein belongs to the TRAFAC class translation factor GTPase superfamily. Classic translation factor GTPase family. EF-Tu/EF-1A subfamily. As to quaternary structure, monomer.

It is found in the cytoplasm. The enzyme catalyses GTP + H2O = GDP + phosphate + H(+). In terms of biological role, GTP hydrolase that promotes the GTP-dependent binding of aminoacyl-tRNA to the A-site of ribosomes during protein biosynthesis. In Acinetobacter baylyi (strain ATCC 33305 / BD413 / ADP1), this protein is Elongation factor Tu.